The primary structure comprises 274 residues: Dermonecrotic toxin SdSicTox-betaIIB1bviii (274 aa).

Histidine 5 is a catalytic residue. Residues glutamate 25 and aspartate 27 each contribute to the Mg(2+) site. The active-site Nucleophile is the histidine 41. Intrachain disulfides connect cysteine 45–cysteine 51 and cysteine 47–cysteine 190. Residue aspartate 85 participates in Mg(2+) binding.

It belongs to the arthropod phospholipase D family. Class II subfamily. Requires Mg(2+) as cofactor. As to expression, expressed by the venom gland.

The protein localises to the secreted. The catalysed reaction is an N-(acyl)-sphingosylphosphocholine = an N-(acyl)-sphingosyl-1,3-cyclic phosphate + choline. It catalyses the reaction an N-(acyl)-sphingosylphosphoethanolamine = an N-(acyl)-sphingosyl-1,3-cyclic phosphate + ethanolamine. The enzyme catalyses a 1-acyl-sn-glycero-3-phosphocholine = a 1-acyl-sn-glycero-2,3-cyclic phosphate + choline. It carries out the reaction a 1-acyl-sn-glycero-3-phosphoethanolamine = a 1-acyl-sn-glycero-2,3-cyclic phosphate + ethanolamine. In terms of biological role, dermonecrotic toxins cleave the phosphodiester linkage between the phosphate and headgroup of certain phospholipids (sphingolipid and lysolipid substrates), forming an alcohol (often choline) and a cyclic phosphate. This toxin acts on sphingomyelin (SM). It may also act on ceramide phosphoethanolamine (CPE), lysophosphatidylcholine (LPC) and lysophosphatidylethanolamine (LPE), but not on lysophosphatidylserine (LPS), and lysophosphatidylglycerol (LPG). It acts by transphosphatidylation, releasing exclusively cyclic phosphate products as second products. Induces dermonecrosis, hemolysis, increased vascular permeability, edema, inflammatory response, and platelet aggregation. The protein is Dermonecrotic toxin SdSicTox-betaIIB1bviii of Sicarius cf. damarensis (strain GJB-2008) (Six-eyed sand spider).